The primary structure comprises 408 residues: ORC1-type DNA replication protein 15 (408 aa).

ATP-binding positions include 60–64 (VGKTA), Tyr208, and Arg220.

It belongs to the CDC6/cdc18 family.

Functionally, involved in regulation of DNA replication. In Haloarcula marismortui (strain ATCC 43049 / DSM 3752 / JCM 8966 / VKM B-1809) (Halobacterium marismortui), this protein is ORC1-type DNA replication protein 15 (cdc6o).